The sequence spans 182 residues: UPF0397 protein BCAH820_2657 (182 aa).

5 helical membrane-spanning segments follow: residues 9-29 (VVAI…GFTI), 40-60 (AILT…IGLI), 71-91 (WGIW…MGFI), 114-134 (ITGL…DIIV), and 142-162 (IVIQ…VLGL).

It belongs to the UPF0397 family.

It localises to the cell membrane. This Bacillus cereus (strain AH820) protein is UPF0397 protein BCAH820_2657.